Consider the following 447-residue polypeptide: UDP-N-acetylmuramate--L-alanine ligase (447 aa).

107-113 contributes to the ATP binding site; it reads GTHGKTT.

It belongs to the MurCDEF family.

Its subcellular location is the cytoplasm. The enzyme catalyses UDP-N-acetyl-alpha-D-muramate + L-alanine + ATP = UDP-N-acetyl-alpha-D-muramoyl-L-alanine + ADP + phosphate + H(+). The protein operates within cell wall biogenesis; peptidoglycan biosynthesis. In terms of biological role, cell wall formation. The sequence is that of UDP-N-acetylmuramate--L-alanine ligase from Rubrobacter xylanophilus (strain DSM 9941 / JCM 11954 / NBRC 16129 / PRD-1).